Reading from the N-terminus, the 298-residue chain is NAD kinase (298 aa).

Aspartate 80 functions as the Proton acceptor in the catalytic mechanism. Residues aspartate 80–glycine 81, asparagine 154–aspartate 155, arginine 182, aspartate 184, threonine 195–serine 200, alanine 219, and glutamine 253 each bind NAD(+).

Belongs to the NAD kinase family. A divalent metal cation serves as cofactor.

Its subcellular location is the cytoplasm. It carries out the reaction NAD(+) + ATP = ADP + NADP(+) + H(+). Its function is as follows. Involved in the regulation of the intracellular balance of NAD and NADP, and is a key enzyme in the biosynthesis of NADP. Catalyzes specifically the phosphorylation on 2'-hydroxyl of the adenosine moiety of NAD to yield NADP. This chain is NAD kinase, found in Acidovorax sp. (strain JS42).